The primary structure comprises 339 residues: Protein RETICULATA-RELATED 2, chloroplastic (339 aa).

The N-terminal 58 residues, 1 to 58, are a transit peptide targeting the chloroplast; the sequence is MAAMAAKLHISTKSDQSNVRLPRLINLSRDPTARVLFPRNGSVSSLHTNFSSPNIMVP. The segment covering 68 to 86 has biased composition (gly residues); sequence IGNHGGGSGSGGGGGGYGG. A disordered region spans residues 68–92; sequence IGNHGGGSGSGGGGGGYGGSEEEES. The next 2 membrane-spanning stretches (helical) occupy residues 148–168 and 213–233; these read FVFS…YLLA and VFAT…NGLI.

The protein belongs to the RETICULATA family.

The protein localises to the plastid. Its subcellular location is the chloroplast membrane. Functionally, may play a role in leaf development. This chain is Protein RETICULATA-RELATED 2, chloroplastic, found in Arabidopsis thaliana (Mouse-ear cress).